A 359-amino-acid polypeptide reads, in one-letter code: Photosystem II protein D1 1 (359 aa).

Helical transmembrane passes span 29–46, 118–133, and 142–156; these read YVGW…AATT, HFLI…EWEL, and WICV…AASA. Histidine 118 provides a ligand contact to chlorophyll a. Tyrosine 126 provides a ligand contact to pheophytin a. [CaMn4O5] cluster contacts are provided by aspartate 170 and glutamate 189. The chain crosses the membrane as a helical span at residues 197–218; it reads FHMMGVAGVFGGSLFSAMHGSL. Histidine 198 lines the chlorophyll a pocket. A quinone-binding positions include histidine 215 and 264–265; that span reads SF. Histidine 215 is a Fe cation binding site. Histidine 272 contacts Fe cation. The chain crosses the membrane as a helical span at residues 274–288; sequence FLAAWPVVGIWFTAL. Histidine 332, glutamate 333, aspartate 342, and alanine 344 together coordinate [CaMn4O5] cluster. Residues 345–359 constitute a propeptide that is removed on maturation; that stretch reads AAESTPVALQAPAIG.

It belongs to the reaction center PufL/M/PsbA/D family. In terms of assembly, PSII is composed of 1 copy each of membrane proteins PsbA, PsbB, PsbC, PsbD, PsbE, PsbF, PsbH, PsbI, PsbJ, PsbK, PsbL, PsbM, PsbT, PsbX, PsbY, PsbZ, Psb30/Ycf12, peripheral proteins PsbO, CyanoQ (PsbQ), PsbU, PsbV and a large number of cofactors. It forms dimeric complexes. Requires The D1/D2 heterodimer binds P680, chlorophylls that are the primary electron donor of PSII, and subsequent electron acceptors. It shares a non-heme iron and each subunit binds pheophytin, quinone, additional chlorophylls, carotenoids and lipids. D1 provides most of the ligands for the Mn4-Ca-O5 cluster of the oxygen-evolving complex (OEC). There is also a Cl(-1) ion associated with D1 and D2, which is required for oxygen evolution. The PSII complex binds additional chlorophylls, carotenoids and specific lipids. as cofactor. Tyr-161 forms a radical intermediate that is referred to as redox-active TyrZ, YZ or Y-Z. Post-translationally, C-terminally processed by CtpA; processing is essential to allow assembly of the oxygen-evolving complex and thus photosynthetic growth.

The protein resides in the cellular thylakoid membrane. It catalyses the reaction 2 a plastoquinone + 4 hnu + 2 H2O = 2 a plastoquinol + O2. Its function is as follows. Photosystem II (PSII) is a light-driven water:plastoquinone oxidoreductase that uses light energy to abstract electrons from H(2)O, generating O(2) and a proton gradient subsequently used for ATP formation. It consists of a core antenna complex that captures photons, and an electron transfer chain that converts photonic excitation into a charge separation. The D1/D2 (PsbA/PsbD) reaction center heterodimer binds P680, the primary electron donor of PSII as well as several subsequent electron acceptors. The sequence is that of Photosystem II protein D1 1 from Synechococcus sp. (strain WH7803).